The sequence spans 271 residues: Formamidopyrimidine-DNA glycosylase (271 aa).

The Schiff-base intermediate with DNA role is filled by proline 2. Glutamate 3 acts as the Proton donor in catalysis. Catalysis depends on lysine 57, which acts as the Proton donor; for beta-elimination activity. Histidine 90, arginine 109, and lysine 151 together coordinate DNA. The FPG-type zinc finger occupies 236–270 (HVYSRGGETCTSCGNLLSEIRLGQRTTVFCGICQT). Catalysis depends on arginine 260, which acts as the Proton donor; for delta-elimination activity.

This sequence belongs to the FPG family. In terms of assembly, monomer. It depends on Zn(2+) as a cofactor.

The catalysed reaction is Hydrolysis of DNA containing ring-opened 7-methylguanine residues, releasing 2,6-diamino-4-hydroxy-5-(N-methyl)formamidopyrimidine.. It carries out the reaction 2'-deoxyribonucleotide-(2'-deoxyribose 5'-phosphate)-2'-deoxyribonucleotide-DNA = a 3'-end 2'-deoxyribonucleotide-(2,3-dehydro-2,3-deoxyribose 5'-phosphate)-DNA + a 5'-end 5'-phospho-2'-deoxyribonucleoside-DNA + H(+). In terms of biological role, involved in base excision repair of DNA damaged by oxidation or by mutagenic agents. Acts as a DNA glycosylase that recognizes and removes damaged bases. Has a preference for oxidized purines, such as 7,8-dihydro-8-oxoguanine (8-oxoG). Has AP (apurinic/apyrimidinic) lyase activity and introduces nicks in the DNA strand. Cleaves the DNA backbone by beta-delta elimination to generate a single-strand break at the site of the removed base with both 3'- and 5'-phosphates. In Shewanella baltica (strain OS195), this protein is Formamidopyrimidine-DNA glycosylase.